Here is a 158-residue protein sequence, read N- to C-terminus: Transcription elongation factor GreA (158 aa).

The protein belongs to the GreA/GreB family.

Its function is as follows. Necessary for efficient RNA polymerase transcription elongation past template-encoded arresting sites. The arresting sites in DNA have the property of trapping a certain fraction of elongating RNA polymerases that pass through, resulting in locked ternary complexes. Cleavage of the nascent transcript by cleavage factors such as GreA or GreB allows the resumption of elongation from the new 3'terminus. GreA releases sequences of 2 to 3 nucleotides. The chain is Transcription elongation factor GreA from Pelobacter propionicus (strain DSM 2379 / NBRC 103807 / OttBd1).